The chain runs to 102 residues: Protein B1 (102 aa).

Residues 1–102 (MLNDAKQTRA…AQPQPSNNRK (102 aa)) are disordered. 2 stretches are compositionally biased toward polar residues: residues 8-17 (TRANPGTSRP) and 51-65 (GKTN…TAGE). Residues 75–88 (KGPRGGKTNTRRTP) are compositionally biased toward basic residues.

Its function is as follows. Not known. Encoded on a subgenomic RNA (RNA3) synthesized during replication and which is co-terminal with RNA1. The sequence is that of Protein B1 (B1) from Black beetle virus (BBV).